The chain runs to 195 residues: uncharacterized protein (195 aa).

The HD domain maps to 24–141 (NTDENLKLIF…VFLADKISWD (118 aa)).

This is an uncharacterized protein from Lactococcus lactis subsp. cremoris (Streptococcus cremoris).